A 652-amino-acid polypeptide reads, in one-letter code: DNA ligase (652 aa).

Residues 29-33 (DAEYD), 78-79 (SL), and Glu107 each bind NAD(+). The N6-AMP-lysine intermediate role is filled by Lys109. NAD(+)-binding residues include Arg130, Glu164, Lys278, and Lys302. Positions 395, 398, 413, and 418 each coordinate Zn(2+). The region spanning 577–652 (ADDAILSGKT…VKDEAWLLDL (76 aa)) is the BRCT domain.

Belongs to the NAD-dependent DNA ligase family. LigA subfamily. The cofactor is Mg(2+). Mn(2+) is required as a cofactor.

It catalyses the reaction NAD(+) + (deoxyribonucleotide)n-3'-hydroxyl + 5'-phospho-(deoxyribonucleotide)m = (deoxyribonucleotide)n+m + AMP + beta-nicotinamide D-nucleotide.. Its function is as follows. DNA ligase that catalyzes the formation of phosphodiester linkages between 5'-phosphoryl and 3'-hydroxyl groups in double-stranded DNA using NAD as a coenzyme and as the energy source for the reaction. It is essential for DNA replication and repair of damaged DNA. The sequence is that of DNA ligase from Streptococcus thermophilus (strain CNRZ 1066).